Consider the following 298-residue polypeptide: GTP cyclohydrolase FolE2 (298 aa).

Belongs to the GTP cyclohydrolase IV family.

It carries out the reaction GTP + H2O = 7,8-dihydroneopterin 3'-triphosphate + formate + H(+). Its pathway is cofactor biosynthesis; 7,8-dihydroneopterin triphosphate biosynthesis; 7,8-dihydroneopterin triphosphate from GTP: step 1/1. In terms of biological role, converts GTP to 7,8-dihydroneopterin triphosphate. This Azotobacter vinelandii (strain DJ / ATCC BAA-1303) protein is GTP cyclohydrolase FolE2.